Reading from the N-terminus, the 201-residue chain is Recombination protein RecR (201 aa).

The C4-type zinc finger occupies 60–75 (CETCGNIDTRSPCTIC). The region spanning 83–178 (SIIVVVADVA…KVTRLAHGVP (96 aa)) is the Toprim domain.

The protein belongs to the RecR family.

Functionally, may play a role in DNA repair. It seems to be involved in an RecBC-independent recombinational process of DNA repair. It may act with RecF and RecO. This chain is Recombination protein RecR, found in Nitrobacter winogradskyi (strain ATCC 25391 / DSM 10237 / CIP 104748 / NCIMB 11846 / Nb-255).